The chain runs to 79 residues: Acyl carrier protein (79 aa).

Residues 2 to 77 (SEIGERVKKI…DATKFLEKNA (76 aa)) form the Carrier domain. Serine 37 is subject to O-(pantetheine 4'-phosphoryl)serine.

Belongs to the acyl carrier protein (ACP) family. In terms of processing, 4'-phosphopantetheine is transferred from CoA to a specific serine of apo-ACP by AcpS. This modification is essential for activity because fatty acids are bound in thioester linkage to the sulfhydryl of the prosthetic group.

The protein localises to the cytoplasm. It participates in lipid metabolism; fatty acid biosynthesis. Carrier of the growing fatty acid chain in fatty acid biosynthesis. The sequence is that of Acyl carrier protein from Nitrobacter winogradskyi (strain ATCC 25391 / DSM 10237 / CIP 104748 / NCIMB 11846 / Nb-255).